A 321-amino-acid chain; its full sequence is Phospho-N-acetylmuramoyl-pentapeptide-transferase (321 aa).

A run of 10 helical transmembrane segments spans residues 1 to 21 (MIFV…PVLI), 50 to 70 (MGGL…IIFV), 76 to 96 (IILL…DDYI), 112 to 132 (FLAQ…FHLV), 140 to 160 (IPFT…IVFL), 176 to 196 (GLAT…SFVL), 200 to 220 (AIGI…PYNI), 225 to 245 (VFMG…ISIM), 250 to 270 (LSLI…MLQV), and 300 to 320 (VVTV…WIGV).

It belongs to the glycosyltransferase 4 family. MraY subfamily. Requires Mg(2+) as cofactor.

Its subcellular location is the cell membrane. The catalysed reaction is UDP-N-acetyl-alpha-D-muramoyl-L-alanyl-gamma-D-glutamyl-L-lysyl-D-alanyl-D-alanine + di-trans,octa-cis-undecaprenyl phosphate = Mur2Ac(oyl-L-Ala-gamma-D-Glu-L-Lys-D-Ala-D-Ala)-di-trans,octa-cis-undecaprenyl diphosphate + UMP. It functions in the pathway cell wall biogenesis; peptidoglycan biosynthesis. In terms of biological role, catalyzes the initial step of the lipid cycle reactions in the biosynthesis of the cell wall peptidoglycan: transfers peptidoglycan precursor phospho-MurNAc-pentapeptide from UDP-MurNAc-pentapeptide onto the lipid carrier undecaprenyl phosphate, yielding undecaprenyl-pyrophosphoryl-MurNAc-pentapeptide, known as lipid I. The sequence is that of Phospho-N-acetylmuramoyl-pentapeptide-transferase from Staphylococcus aureus (strain bovine RF122 / ET3-1).